The primary structure comprises 206 residues: Phosphoserine phosphatase (206 aa).

Asp7 functions as the Nucleophile in the catalytic mechanism. Residues Asp7 and Asp9 each coordinate Mg(2+). Asp9 serves as the catalytic Proton donor. Residues Glu16, Arg52, 95–96 (SG), and Lys140 each bind substrate. Asp163 contributes to the Mg(2+) binding site. Asn166 contributes to the substrate binding site.

The protein belongs to the HAD-like hydrolase superfamily. SerB family. Mg(2+) serves as cofactor.

The enzyme catalyses O-phospho-L-serine + H2O = L-serine + phosphate. The catalysed reaction is O-phospho-D-serine + H2O = D-serine + phosphate. The protein operates within amino-acid biosynthesis; L-serine biosynthesis; L-serine from 3-phospho-D-glycerate: step 3/3. This chain is Phosphoserine phosphatase, found in Wolinella succinogenes (strain ATCC 29543 / DSM 1740 / CCUG 13145 / JCM 31913 / LMG 7466 / NCTC 11488 / FDC 602W) (Vibrio succinogenes).